The sequence spans 553 residues: Putative transport protein YidE (553 aa).

A run of 5 helical transmembrane segments spans residues 4 to 24, 28 to 48, 65 to 85, 95 to 115, and 158 to 178; these read IALT…IGNI, GVGF…HFVD, FGLI…FFAS, LFAV…HKIF, and MSYA…MWLM. RCK C-terminal domains lie at 192–276 and 279–361; these read KHES…VIGK and DTSL…VVGN. A run of 6 helical transmembrane segments spans residues 371-391, 393-413, 437-457, 464-484, 493-513, and 533-553; these read MLPV…PLFV, GFPV…ALIL, LGIV…FVDT, LSWI…IGLL, YLTL…LAFA, and LVMF…WGMG.

Belongs to the AAE transporter (TC 2.A.81) family. YidE subfamily.

The protein resides in the cell membrane. The protein is Putative transport protein YidE of Salmonella paratyphi C (strain RKS4594).